A 244-amino-acid polypeptide reads, in one-letter code: Leucyl/phenylalanyl-tRNA--protein transferase (244 aa).

A disordered region spans residues 1–22 (MHSQPYLLSPAPNNTPFPPAEH).

Belongs to the L/F-transferase family.

It localises to the cytoplasm. It carries out the reaction N-terminal L-lysyl-[protein] + L-leucyl-tRNA(Leu) = N-terminal L-leucyl-L-lysyl-[protein] + tRNA(Leu) + H(+). The enzyme catalyses N-terminal L-arginyl-[protein] + L-leucyl-tRNA(Leu) = N-terminal L-leucyl-L-arginyl-[protein] + tRNA(Leu) + H(+). It catalyses the reaction L-phenylalanyl-tRNA(Phe) + an N-terminal L-alpha-aminoacyl-[protein] = an N-terminal L-phenylalanyl-L-alpha-aminoacyl-[protein] + tRNA(Phe). Its function is as follows. Functions in the N-end rule pathway of protein degradation where it conjugates Leu, Phe and, less efficiently, Met from aminoacyl-tRNAs to the N-termini of proteins containing an N-terminal arginine or lysine. In Xylella fastidiosa (strain M12), this protein is Leucyl/phenylalanyl-tRNA--protein transferase.